Reading from the N-terminus, the 227-residue chain is Putative N-acetylmannosamine-6-phosphate 2-epimerase (227 aa).

This sequence belongs to the NanE family.

It catalyses the reaction an N-acyl-D-glucosamine 6-phosphate = an N-acyl-D-mannosamine 6-phosphate. The protein operates within amino-sugar metabolism; N-acetylneuraminate degradation; D-fructose 6-phosphate from N-acetylneuraminate: step 3/5. Functionally, converts N-acetylmannosamine-6-phosphate (ManNAc-6-P) to N-acetylglucosamine-6-phosphate (GlcNAc-6-P). This chain is Putative N-acetylmannosamine-6-phosphate 2-epimerase, found in Shouchella clausii (strain KSM-K16) (Alkalihalobacillus clausii).